The sequence spans 507 residues: Cobyric acid synthase (507 aa).

The region spanning 251–448 is the GATase cobBQ-type domain; that stretch reads DIDIAVVHLP…LHGLFDSDAF (198 aa). The active-site Nucleophile is the Cys332. The active site involves His440.

This sequence belongs to the CobB/CobQ family. CobQ subfamily.

Its pathway is cofactor biosynthesis; adenosylcobalamin biosynthesis. In terms of biological role, catalyzes amidations at positions B, D, E, and G on adenosylcobyrinic A,C-diamide. NH(2) groups are provided by glutamine, and one molecule of ATP is hydrogenolyzed for each amidation. The protein is Cobyric acid synthase of Klebsiella pneumoniae subsp. pneumoniae (strain ATCC 700721 / MGH 78578).